Reading from the N-terminus, the 266-residue chain is Putative carbamate hydrolase RutD (266 aa).

The 114-residue stretch at Ala15 to Ala128 folds into the AB hydrolase-1 domain.

The protein belongs to the AB hydrolase superfamily. Hydrolase RutD family.

It carries out the reaction carbamate + 2 H(+) = NH4(+) + CO2. Its function is as follows. Involved in pyrimidine catabolism. May facilitate the hydrolysis of carbamate, a reaction that can also occur spontaneously. The protein is Putative carbamate hydrolase RutD of Variovorax paradoxus (strain S110).